A 569-amino-acid chain; its full sequence is Laccase-6 (569 aa).

The signal sequence occupies residues 1–29 (MTSSAVPSLFRLSFLLFTLQVMNIGRIGA). Plastocyanin-like domains are found at residues 37 to 153 (KVQT…PKAS) and 163 to 315 (NEHT…YIGA). N-linked (GlcNAc...) asparagine glycosylation occurs at Asn-83. The Cu cation site is built by His-87, His-89, His-132, and His-134. Asn-208, Asn-303, Asn-319, Asn-392, Asn-438, and Asn-444 each carry an N-linked (GlcNAc...) asparagine glycan. The region spanning 417-553 (DFPTTPEKAY…STMFIVKNGK (137 aa)) is the Plastocyanin-like 3 domain. Positions 472, 475, 477, 532, 533, 534, 538, and 543 each coordinate Cu cation.

The protein belongs to the multicopper oxidase family. The cofactor is Cu cation. In terms of tissue distribution, predominantly expressed in the inflorescence stem, but not in siliques.

The protein localises to the secreted. Its subcellular location is the extracellular space. The protein resides in the apoplast. The catalysed reaction is 4 hydroquinone + O2 = 4 benzosemiquinone + 2 H2O. Lignin degradation and detoxification of lignin-derived products. This Arabidopsis thaliana (Mouse-ear cress) protein is Laccase-6 (LAC6).